A 214-amino-acid polypeptide reads, in one-letter code: ATP-dependent dethiobiotin synthetase BioD (214 aa).

10–15 (GIGKTY) contributes to the ATP binding site. Thr14 lines the Mg(2+) pocket. Lys35 is an active-site residue. Substrate is bound at residue Thr39. ATP contacts are provided by residues Asp44, 109 to 112 (EGAG), and 169 to 170 (NC). Positions 44 and 109 each coordinate Mg(2+).

The protein belongs to the dethiobiotin synthetase family. In terms of assembly, homodimer. Mg(2+) is required as a cofactor.

Its subcellular location is the cytoplasm. It catalyses the reaction (7R,8S)-7,8-diammoniononanoate + CO2 + ATP = (4R,5S)-dethiobiotin + ADP + phosphate + 3 H(+). Its pathway is cofactor biosynthesis; biotin biosynthesis; biotin from 7,8-diaminononanoate: step 1/2. Catalyzes a mechanistically unusual reaction, the ATP-dependent insertion of CO2 between the N7 and N8 nitrogen atoms of 7,8-diaminopelargonic acid (DAPA, also called 7,8-diammoniononanoate) to form a ureido ring. The protein is ATP-dependent dethiobiotin synthetase BioD of Methanocaldococcus jannaschii (strain ATCC 43067 / DSM 2661 / JAL-1 / JCM 10045 / NBRC 100440) (Methanococcus jannaschii).